The sequence spans 61 residues: Bacteriocin leucocin-B (61 aa).

Residues 1-24 (MNNMKSADNYQQLDNNALEQVVGG) constitute a propeptide that is removed on maturation. The cysteines at positions 33 and 38 are disulfide-linked.

This sequence belongs to the bacteriocin class IIA/YGNGV family.

The protein localises to the secreted. In terms of biological role, active against L.monocytogenes and several lactic acid bacteria. The sequence is that of Bacteriocin leucocin-B from Leuconostoc carnosum.